Reading from the N-terminus, the 726-residue chain is Catalase-peroxidase (726 aa).

Residues 90-213 constitute a cross-link (tryptophyl-tyrosyl-methioninium (Trp-Tyr) (with M-239)); sequence WHAAGTYRIG…LAAVQMGLIY (124 aa). The Proton acceptor role is filled by His-91. A cross-link (tryptophyl-tyrosyl-methioninium (Tyr-Met) (with W-90)) is located at residues 213 to 239; that stretch reads YVNPEGPNGKPDPAAAARDIRETFARM. His-254 lines the heme b pocket. The interval 338–359 is disordered; the sequence is TPKGGAGAGTVPDAHDPSKRHA.

It belongs to the peroxidase family. Peroxidase/catalase subfamily. As to quaternary structure, homodimer or homotetramer. The cofactor is heme b. Formation of the three residue Trp-Tyr-Met cross-link is important for the catalase, but not the peroxidase activity of the enzyme.

The enzyme catalyses H2O2 + AH2 = A + 2 H2O. It carries out the reaction 2 H2O2 = O2 + 2 H2O. Its function is as follows. Bifunctional enzyme with both catalase and broad-spectrum peroxidase activity. The sequence is that of Catalase-peroxidase from Bradyrhizobium sp. (strain ORS 278).